Reading from the N-terminus, the 703-residue chain is Elongation factor G 1 (703 aa).

The tr-type G domain occupies 8 to 290 (ERYRNIGISA…AVIDFLPSPV (283 aa)). Residues 17–24 (AHIDAGKT), 88–92 (DTPGH), and 142–145 (NKMD) each bind GTP.

It belongs to the TRAFAC class translation factor GTPase superfamily. Classic translation factor GTPase family. EF-G/EF-2 subfamily.

The protein localises to the cytoplasm. Catalyzes the GTP-dependent ribosomal translocation step during translation elongation. During this step, the ribosome changes from the pre-translocational (PRE) to the post-translocational (POST) state as the newly formed A-site-bound peptidyl-tRNA and P-site-bound deacylated tRNA move to the P and E sites, respectively. Catalyzes the coordinated movement of the two tRNA molecules, the mRNA and conformational changes in the ribosome. The protein is Elongation factor G 1 of Cupriavidus metallidurans (strain ATCC 43123 / DSM 2839 / NBRC 102507 / CH34) (Ralstonia metallidurans).